Consider the following 517-residue polypeptide: Ribonuclease Y (517 aa).

A helical transmembrane segment spans residues Met1–Val21. The region spanning Leu207–Asp273 is the KH domain. The region spanning Ala333–Ala426 is the HD domain.

The protein belongs to the RNase Y family.

It localises to the cell membrane. Endoribonuclease that initiates mRNA decay. This is Ribonuclease Y from Campylobacter jejuni subsp. jejuni serotype O:6 (strain 81116 / NCTC 11828).